Here is a 295-residue protein sequence, read N- to C-terminus: Bifunctional protein FolD (295 aa).

Residues 165-167, Ser190, and Ile231 each bind NADP(+); that span reads GRS.

Belongs to the tetrahydrofolate dehydrogenase/cyclohydrolase family. In terms of assembly, homodimer.

It catalyses the reaction (6R)-5,10-methylene-5,6,7,8-tetrahydrofolate + NADP(+) = (6R)-5,10-methenyltetrahydrofolate + NADPH. The enzyme catalyses (6R)-5,10-methenyltetrahydrofolate + H2O = (6R)-10-formyltetrahydrofolate + H(+). Its pathway is one-carbon metabolism; tetrahydrofolate interconversion. Catalyzes the oxidation of 5,10-methylenetetrahydrofolate to 5,10-methenyltetrahydrofolate and then the hydrolysis of 5,10-methenyltetrahydrofolate to 10-formyltetrahydrofolate. The protein is Bifunctional protein FolD of Nitrosomonas eutropha (strain DSM 101675 / C91 / Nm57).